Consider the following 323-residue polypeptide: MSDRPTARRWGKCGPLCTRENIMVAFKGVWTQAFWKAVTAEFLAMLIFVLLSLGSTINWGGTEKPLPVDMVLISLCFGLSIATMVQCFGHISGGHINPAVTVAMVCTRKISIAKSVFYIAAQCLGAIIGAGILYLVTPPSVVGGLGVTMVHGNLTAGHGLLVELIITFQLVFTIFASCDSKRTDVTGSIALAIGFSVAIGHLFAINYTGASMNPARSFGPAVIMGNWENHWIYWVGPIIGAVLAGGLYEYVFCPDVEFKRRFKEAFSKAAQQTKGSYMEVEDNRSQVETDDLILKPGVVHVIDVDRGEEKKGKDQSGEVLSSV.

At 1 to 36 the chain is on the cytoplasmic side; it reads MSDRPTARRWGKCGPLCTRENIMVAFKGVWTQAFWK. Residues C13 and C17 are each lipidated (S-palmitoyl cysteine). The helical transmembrane segment at 37–57 threads the bilayer; that stretch reads AVTAEFLAMLIFVLLSLGSTI. Over 58–69 the chain is Extracellular; sequence NWGGTEKPLPVD. The chain crosses the membrane as a helical span at residues 70-89; sequence MVLISLCFGLSIATMVQCFG. At 90–93 the chain is on the cytoplasmic side; the sequence is HISG. The discontinuously helical intramembrane region spans 94–101; sequence GHINPAVT. Residues 97 to 99 carry the NPA 1 motif; it reads NPA. The Cytoplasmic portion of the chain corresponds to 102-115; that stretch reads VAMVCTRKISIAKS. The residue at position 111 (S111) is a Phosphoserine; by PKG. A helical membrane pass occupies residues 116–136; the sequence is VFYIAAQCLGAIIGAGILYLV. The Extracellular portion of the chain corresponds to 137–155; that stretch reads TPPSVVGGLGVTMVHGNLT. N153 carries an N-linked (GlcNAc...) asparagine glycan. The chain crosses the membrane as a helical span at residues 156–176; the sequence is AGHGLLVELIITFQLVFTIFA. Residues 177 to 184 are Cytoplasmic-facing; the sequence is SCDSKRTD. S180 is subject to Phosphoserine; by PKC. The helical transmembrane segment at 185 to 205 threads the bilayer; it reads VTGSIALAIGFSVAIGHLFAI. The N-linked (GlcNAc...) asparagine glycan is linked to N206. Over 206 to 208 the chain is Extracellular; that stretch reads NYT. The segment at residues 209–222 is an intramembrane region (discontinuously helical); sequence GASMNPARSFGPAV. Residues 213 to 215 carry the NPA 2 motif; that stretch reads NPA. The Extracellular portion of the chain corresponds to 223-231; it reads IMGNWENHW. The chain crosses the membrane as a helical span at residues 232–252; that stretch reads IYWVGPIIGAVLAGGLYEYVF. Residues 253–323 are Cytoplasmic-facing; the sequence is CPDVEFKRRF…DQSGEVLSSV (71 aa). Phosphoserine is present on residues S276 and S285. T289 is modified (phosphothreonine). At S321 the chain carries Phosphoserine.

This sequence belongs to the MIP/aquaporin (TC 1.A.8) family. Homotetramer. The tetramers can form oligomeric arrays in membranes. The size of the oligomers differs between tissues and is smaller in skeletal muscle than in brain. Interaction between AQP4 oligomeric arrays in close-by cells can contribute to cell-cell adhesion. Part of a complex containing MLC1, TRPV4, HEPACAM and ATP1B1. Phosphorylation by PKC at Ser-180 reduces conductance by 50%. Phosphorylation by PKG at Ser-111 in response to glutamate increases conductance by 40%. Post-translationally, isoform 2: Palmitoylated on its N-terminal region. Isoform 1: Not palmitoylated. Detected in skeletal muscle. Detected in stomach, along the glandular base region of the fundic gland (at protein level). Detected in brain, lung and skeletal muscle, and at much lower levels in heart and ovary.

Its subcellular location is the cell membrane. It localises to the basolateral cell membrane. The protein resides in the endosome membrane. The protein localises to the sarcolemma. It is found in the cell projection. The enzyme catalyses H2O(in) = H2O(out). Functionally, forms a water-specific channel. Plays an important role in brain water homeostasis. It is involved in glymphatic solute transport and is required for a normal rate of water exchange across the blood brain interface. Required for normal levels of cerebrospinal fluid influx into the brain cortex and parenchyma along paravascular spaces that surround penetrating arteries, and for normal drainage of interstitial fluid along paravenous drainage pathways. Thereby, it is required for normal clearance of solutes from the brain interstitial fluid, including soluble beta-amyloid peptides derived from APP. Plays a redundant role in urinary water homeostasis and urinary concentrating ability. The sequence is that of Aquaporin-4 (AQP4) from Homo sapiens (Human).